The chain runs to 95 residues: Aspartyl/glutamyl-tRNA(Asn/Gln) amidotransferase subunit C (95 aa).

It belongs to the GatC family. As to quaternary structure, heterotrimer of A, B and C subunits.

It carries out the reaction L-glutamyl-tRNA(Gln) + L-glutamine + ATP + H2O = L-glutaminyl-tRNA(Gln) + L-glutamate + ADP + phosphate + H(+). It catalyses the reaction L-aspartyl-tRNA(Asn) + L-glutamine + ATP + H2O = L-asparaginyl-tRNA(Asn) + L-glutamate + ADP + phosphate + 2 H(+). Its function is as follows. Allows the formation of correctly charged Asn-tRNA(Asn) or Gln-tRNA(Gln) through the transamidation of misacylated Asp-tRNA(Asn) or Glu-tRNA(Gln) in organisms which lack either or both of asparaginyl-tRNA or glutaminyl-tRNA synthetases. The reaction takes place in the presence of glutamine and ATP through an activated phospho-Asp-tRNA(Asn) or phospho-Glu-tRNA(Gln). The protein is Aspartyl/glutamyl-tRNA(Asn/Gln) amidotransferase subunit C of Thermoanaerobacter pseudethanolicus (strain ATCC 33223 / 39E) (Clostridium thermohydrosulfuricum).